Consider the following 63-residue polypeptide: Conotoxin Gm5.1 (63 aa).

The signal sequence occupies residues methionine 1–threonine 21. Residues valine 22–arginine 50 constitute a propeptide that is removed on maturation.

It belongs to the conotoxin T superfamily. Post-translationally, contains 2 disulfide bonds that can be either 'C1-C3, C2-C4' or 'C1-C4, C2-C3', since these disulfide connectivities have been observed for conotoxins with cysteine framework V (for examples, see AC P0DQQ7 and AC P81755). Expressed by the venom duct.

It is found in the secreted. The sequence is that of Conotoxin Gm5.1 from Conus gloriamaris (Glory-of-the-Sea cone).